Consider the following 1168-residue polypeptide: Homeodomain-interacting protein kinase 2 (1168 aa).

S16 bears the Phosphoserine mark. K32 is covalently cross-linked (Glycyl lysine isopeptide (Lys-Gly) (interchain with G-Cter in SUMO); alternate). K32 is covalently cross-linked (Glycyl lysine isopeptide (Lys-Gly) (interchain with G-Cter in SUMO2); alternate). The interval 97-230 (SASSTSVTGQ…TNEIVAIKIL (134 aa)) is transcriptional corepression. Residues S118 and S135 each carry the phosphoserine modification. T141 is subject to Phosphothreonine. The segment at 189–520 (HEVLCSMTNT…DADKRITPIE (332 aa)) is interaction with DAXX. Residues 199 to 527 (YEVLEFLGRG…PIETLNHPFV (329 aa)) form the Protein kinase domain. ATP is bound by residues 205–213 (LGRGTFGQV) and K228. A phosphothreonine mark is found at T252 and T273. The Proton acceptor role is filled by D324. The residue at position 361 (Y361) is a Phosphotyrosine. A Phosphoserine modification is found at S441. A phosphothreonine mark is found at T482, T517, and T566. Positions 539–816 (THVKSCFQNM…KENTPPRCAM (278 aa)) are interaction with SKI and SMAD1. The tract at residues 595–772 (PSAASMAAVA…MRQQPTSTTS (178 aa)) is interaction with DAZAP2. 2 positions are modified to phosphoserine: S607 and S641. T660 is modified (phosphothreonine). The interval 724 to 869 (RNTHAHGSHY…ITISSDTDEE (146 aa)) is interaction with POU4F1. The interval 746 to 848 (HVTLPAAQPL…TRERQRQTIV (103 aa)) is interaction with CTBP1. An interaction with HMGA1 region spans residues 759-869 (VAHVMRQQPT…ITISSDTDEE (111 aa)). The tract at residues 764-820 (RQQPTSTTSSRKSKQHQPSMRNVSTCEVTSSQSTSSPQRSKRVKENTPPRCAMVHSS) is disordered. Residues 765-791 (QQPTSTTSSRKSKQHQPSMRNVSTCEV) show a composition bias toward polar residues. The short motif at 774–777 (RKSK) is the Nuclear localization signal 1 (NLS1) element. 2 positions are modified to phosphoserine: S787 and S799. A compositionally biased stretch (low complexity) spans 792–801 (TSSQSTSSPQ). The Nuclear localization signal 2 (NLS2) signature appears at 804-807 (KRVK). An interaction with TP53 and TP73 region spans residues 812 to 907 (PRCAMVHSSP…YSDSSSNTSP (96 aa)). Residues 845–879 (QTIVIPDTPSPTVSVITISSDTDEEEEQKHAPTST) form an interaction with UBE2I region. Residues 845–952 (QTIVIPDTPS…PLKTQASEVL (108 aa)) form a localization to nuclear speckles region. The segment at 845–952 (QTIVIPDTPS…PLKTQASEVL (108 aa)) is required for localization to nuclear speckles. Residues 854–876 (SPTVSVITISSDTDEEEEQKHAP) form an interaction with UBL1 region. Positions 856–880 (TVSVITISSDTDEEEEQKHAPTSTV) are SUMO interaction motifs (SIM); required for nuclear localization and kinase activity. The tract at residues 894–936 (HDSPYSDSSSNTSPYSVQQRTGHNGTNTLDTKGALENHCTGNP) is disordered. Residues 895–909 (DSPYSDSSSNTSPYS) are compositionally biased toward low complexity. Residue S906 is modified to Phosphoserine. Positions 907 to 1022 (PYSVQQRTGH…LSQAQPHMAT (116 aa)) are interaction with AXIN1. Residues 910–923 (VQQRTGHNGTNTLD) show a composition bias toward polar residues. Residues K925 and K945 each participate in a glycyl lysine isopeptide (Lys-Gly) (interchain with G-Cter in SUMO2) cross-link. Residues 956 to 1168 (DSLGPAVSTG…PAKVNQYPYI (213 aa)) form an autoinhibitory domain (AID) region. The tract at residues 960–1030 (PAVSTGHHSS…ATDRTGSHRR (71 aa)) is disordered. Phosphoserine is present on S963. Low complexity-rich tracts occupy residues 965-991 (GHHS…GSSS) and 998-1018 (QQRP…QAQP). 3 positions are modified to phosphoserine: S1014, S1125, and S1158. A Glycyl lysine isopeptide (Lys-Gly) (interchain with G-Cter in SUMO) cross-link involves residue K1161.

It belongs to the protein kinase superfamily. CMGC Ser/Thr protein kinase family. HIPK subfamily. In terms of assembly, interacts with CREB1, SIAH1, WSB1, CBX4, TRADD, p53/TP53, TP73, TP63, CREBBP, DAXX, P53DINP1, SKI, SMAD1, SMAD2 and SMAD3, but not SMAD4. Interacts with ATF1, PML, RUNX1, EP300, NKX1-2, NKX2-5, UBE2I, HMGA1, CTBP1, AXIN1, NLK, MYB, POU4F1, POU4F2, POU4F3, UBE2I, UBL1 and ZBTB4. Probably part of a complex consisting of p53/TP53, HIPK2 and AXIN1. Interacts with SP100; positively regulates TP53-dependent transcription. Interacts with DAZAP2; the interaction results in phosphorylation of DAZAP2 which causes localization of DAZAP2 to the nucleus, reduces interaction of DAZAP2 with HIPK2 and prevents DAZAP2-dependent degradation of HIPK2. Interacts with SIAH1; the interaction is promoted by DAZAP2 and results in SIAH1-mediated ubiquitination and subsequent proteasomal degradation of HIPK2. Post-translationally, autophosphorylation at Tyr-361 in the activation loop activates the kinase and promotes nuclear localization. Sumoylated. When conjugated it is directed to nuclear speckles. Desumoylated by SENP1. Sumoylation on Lys-32 is promoted by the E3 SUMO-protein ligase CBX4. In terms of processing, ubiquitinated by FBXO3, WSB1 and SIAH1, leading to rapid proteasome-dependent degradation. The degradation mediated by FBXO3, but not ubiquitination, is prevented in the presence of PML. The degradation mediated by WSB1 and SIAH1 is reversibly reduced upon DNA damage. Post-translationally, cleaved at Asp-895 and Asp-956 by CASP6 in a p53/TP53-dependent manner. The cleaved form lacks the autoinhibitory C-terminal domain (AID), resulting in a hyperactive kinase, which potentiates p53/TP53 Ser-46 phosphorylation and subsequent activation of the cell death machinery.

The protein resides in the nucleus. Its subcellular location is the PML body. It is found in the cytoplasm. It catalyses the reaction L-seryl-[protein] + ATP = O-phospho-L-seryl-[protein] + ADP + H(+). The enzyme catalyses L-threonyl-[protein] + ATP = O-phospho-L-threonyl-[protein] + ADP + H(+). Its function is as follows. Serine/threonine-protein kinase involved in transcription regulation, p53/TP53-mediated cellular apoptosis and regulation of the cell cycle. Acts as a corepressor of several transcription factors, including SMAD1 and POU4F1/Brn3a and probably NK homeodomain transcription factors. Phosphorylates PDX1, ATF1, PML, p53/TP53, CREB1, CTBP1, CBX4, RUNX1, EP300, CTNNB1, HMGA1, ZBTB4 and DAZAP2. Inhibits cell growth and promotes apoptosis through the activation of p53/TP53 both at the transcription level and at the protein level (by phosphorylation and indirect acetylation). The phosphorylation of p53/TP53 may be mediated by a p53/TP53-HIPK2-AXIN1 complex. Involved in the response to hypoxia by acting as a transcriptional co-suppressor of HIF1A. Mediates transcriptional activation of TP73. In response to TGFB, cooperates with DAXX to activate JNK. Negative regulator through phosphorylation and subsequent proteasomal degradation of CTNNB1 and the antiapoptotic factor CTBP1. In the Wnt/beta-catenin signaling pathway acts as an intermediate kinase between MAP3K7/TAK1 and NLK to promote the proteasomal degradation of MYB. Phosphorylates CBX4 upon DNA damage and promotes its E3 SUMO-protein ligase activity. Activates CREB1 and ATF1 transcription factors by phosphorylation in response to genotoxic stress. In response to DNA damage, stabilizes PML by phosphorylation. PML, HIPK2 and FBXO3 may act synergically to activate p53/TP53-dependent transactivation. Promotes angiogenesis, and is involved in erythroid differentiation, especially during fetal liver erythropoiesis. Phosphorylation of RUNX1 and EP300 stimulates EP300 transcription regulation activity. Triggers ZBTB4 protein degradation in response to DNA damage. In response to DNA damage, phosphorylates DAZAP2 which localizes DAZAP2 to the nucleus, reduces interaction of DAZAP2 with HIPK2 and prevents DAZAP2-dependent ubiquitination of HIPK2 by E3 ubiquitin-protein ligase SIAH1 and subsequent proteasomal degradation. Modulates HMGA1 DNA-binding affinity. In response to high glucose, triggers phosphorylation-mediated subnuclear localization shifting of PDX1. Involved in the regulation of eye size, lens formation and retinal lamination during late embryogenesis. The polypeptide is Homeodomain-interacting protein kinase 2 (Hipk2) (Mesocricetus auratus (Golden hamster)).